The sequence spans 276 residues: 3-methyl-2-oxobutanoate hydroxymethyltransferase (276 aa).

Positions 44 and 83 each coordinate Mg(2+). 3-methyl-2-oxobutanoate-binding positions include 44–45 (DS), Asp83, and Lys113. A Mg(2+)-binding site is contributed by Glu115. Glu182 (proton acceptor) is an active-site residue.

The protein belongs to the PanB family. In terms of assembly, homodecamer; pentamer of dimers. Mg(2+) is required as a cofactor.

The protein resides in the cytoplasm. It catalyses the reaction 3-methyl-2-oxobutanoate + (6R)-5,10-methylene-5,6,7,8-tetrahydrofolate + H2O = 2-dehydropantoate + (6S)-5,6,7,8-tetrahydrofolate. It participates in cofactor biosynthesis; (R)-pantothenate biosynthesis; (R)-pantoate from 3-methyl-2-oxobutanoate: step 1/2. Functionally, catalyzes the reversible reaction in which hydroxymethyl group from 5,10-methylenetetrahydrofolate is transferred onto alpha-ketoisovalerate to form ketopantoate. This is 3-methyl-2-oxobutanoate hydroxymethyltransferase from Clostridium acetobutylicum (strain ATCC 824 / DSM 792 / JCM 1419 / IAM 19013 / LMG 5710 / NBRC 13948 / NRRL B-527 / VKM B-1787 / 2291 / W).